The following is a 313-amino-acid chain: GTP cyclohydrolase MptA (313 aa).

It belongs to the GTP cyclohydrolase IV family. As to quaternary structure, homodimer. Fe(2+) is required as a cofactor.

It carries out the reaction GTP + H2O = 7,8-dihydroneopterin 2',3'-cyclic phosphate + formate + diphosphate + H(+). It functions in the pathway cofactor biosynthesis; 5,6,7,8-tetrahydromethanopterin biosynthesis. With respect to regulation, inhibited by GTP concentrations greater than 0.3 mM and by 2-amino-5-formylamino-6-ribofuranosylamino-4(3H)-pyrimidinone 5'-phosphate (fapyGMP). Partial inhibition is observed when 2 mM GMP, dGTP, or 7-methyl-GTP was included along with 2 mM GTP. Converts GTP to 7,8-dihydro-D-neopterin 2',3'-cyclic phosphate, the first intermediate in the biosynthesis of coenzyme methanopterin. It is also able to utilize a variety of GTP analogs as substrates, including GDP, beta,gamma-methylene-GTP and GTP-[gamma-thio]. This is GTP cyclohydrolase MptA (mptA) from Methanocaldococcus jannaschii (strain ATCC 43067 / DSM 2661 / JAL-1 / JCM 10045 / NBRC 100440) (Methanococcus jannaschii).